Here is a 70-residue protein sequence, read N- to C-terminus: Turripeptide Pal9.2 (70 aa).

An N-terminal signal peptide occupies residues 1–20; the sequence is MKVYCLLVVLLVGLVSQTQG. Residues 21 to 70 enclose the Kazal-like domain; it reads QLDKKCNMACTLDYRPVCGSDGKTYPNRCALTSTACESQQSITVLHDGEC. Cystine bridges form between Cys26–Cys56, Cys30–Cys49, and Cys38–Cys70.

Belongs to the conopeptide P-like superfamily. Expressed by the venom duct.

The protein localises to the secreted. Acts as a neurotoxin by inhibiting an ion channel. May also act as a serine protease inhibitor, since it possess the kazal serine protease inhibitor signature. The sequence is that of Turripeptide Pal9.2 from Polystira albida (White giant-turris).